A 1136-amino-acid chain; its full sequence is Probable LRR receptor-like serine/threonine-protein kinase At4g36180 (1136 aa).

The first 22 residues, 1–22 (MAMDISLFFIFLVIYAPLVSYA), serve as a signal peptide directing secretion. The Extracellular segment spans residues 23–751 (DESQAEIDAL…TAEGKKKKRK (729 aa)). LRR repeat units follow at residues 93–115 (MLRKLSLRSNSFNGTIPTSLAYC), 117–139 (RLLSVFLQYNSLSGKLPPAMRNL), 141–162 (SLEVFNVAGNRLSGEIPVGLPS), 163–186 (SLQFLDISSNTFSGQIPSGLANLT), 187–210 (QLQLLNLSYNQLTGEIPASLGNLQ), 211–233 (SLQYLWLDFNLLQGTLPSAISNC), 235–256 (SLVHLSASENEIGGVIPAAYGA), and 259–280 (KLEVLSLSNNNFSGTVPFSLFC). N-linked (GlcNAc...) asparagine glycosylation is found at Asn-105 and Asn-138. Asn-184, Asn-192, and Asn-232 each carry an N-linked (GlcNAc...) asparagine glycan. N-linked (GlcNAc...) asparagine glycans are attached at residues Asn-269 and Asn-281. LRR repeat units follow at residues 283 to 304 (SLTIVQLGFNAFSDIVRPETTA), 309 to 330 (GLQVLDLQENRISGRFPLWLTN), 333 to 355 (SLKNLDVSGNLFSGEIPPDIGNL), 357 to 379 (RLEELKLANNSLTGEIPVEIKQC), 381 to 403 (SLDVLDFEGNSLKGQIPEFLGYM), 405 to 426 (ALKVLSLGRNSFSGYVPSSMVN), 429 to 452 (QLERLNLGENNLNGSFPVELMALT), 453 to 479 (SLSELDLSGNRFSGAVPVSISNLSNLS), 480 to 500 (FLNLSGNGFSGEIPASVGNLF), 501 to 524 (KLTALDLSKQNMSGEVPVELSGLP), 525 to 546 (NVQVIALQGNNFSGVVPEGFSS), 549 to 571 (SLRYVNLSSNSFSGEIPQTFGFL), 573 to 595 (LLVSLSLSDNHISGSIPPEIGNC), 597 to 620 (ALEVLELRSNRLMGHIPADLSRLP), 621 to 643 (RLKVLDLGQNNLSGEIPPEISQS), 645 to 666 (SLNSLSLDHNHLSGVIPGSFSG), 669 to 691 (NLTKMDLSVNNLTGEIPASLALI), and 694 to 716 (NLVYFNVSSNNLKGEIPASLGSR). N-linked (GlcNAc...) asparagine glycosylation occurs at Asn-365. Asn-441, Asn-474, Asn-477, Asn-482, Asn-511, Asn-535, Asn-554, and Asn-594 each carry an N-linked (GlcNAc...) asparagine glycan. Residue Asn-631 is glycosylated (N-linked (GlcNAc...) asparagine). 4 N-linked (GlcNAc...) asparagine glycosylation sites follow: Asn-669, Asn-679, Asn-699, and Asn-719. Residues 752–772 (MILMIVMAAIGAFLLSLFCCF) traverse the membrane as a helical segment. Over 773–1136 (YVYTLLKWRK…ADPTSQPSPA (364 aa)) the chain is Cytoplasmic. The tract at residues 786-819 (QQSTTGEKKRSPGRTSAGSRVRSSTSRSSTENGE) is disordered. Low complexity predominate over residues 799–815 (RTSAGSRVRSSTSRSST). Thr-830 and Thr-838 each carry phosphothreonine. Residues 841–1123 (FDEENVLSRT…LEGCRVGPDV (283 aa)) form the Protein kinase domain. Residues Tyr-915 and Tyr-1010 each carry the phosphotyrosine modification.

Belongs to the protein kinase superfamily. Ser/Thr protein kinase family.

It localises to the cell membrane. It carries out the reaction L-seryl-[protein] + ATP = O-phospho-L-seryl-[protein] + ADP + H(+). The catalysed reaction is L-threonyl-[protein] + ATP = O-phospho-L-threonyl-[protein] + ADP + H(+). The chain is Probable LRR receptor-like serine/threonine-protein kinase At4g36180 from Arabidopsis thaliana (Mouse-ear cress).